Reading from the N-terminus, the 131-residue chain is Ribosome-binding factor A (131 aa).

The interval 110-131 (QMNLGEDNEDNEDKENNDPGEE) is disordered. A compositionally biased stretch (acidic residues) spans 115–131 (EDNEDNEDKENNDPGEE).

The protein belongs to the RbfA family. In terms of assembly, monomer. Binds 30S ribosomal subunits, but not 50S ribosomal subunits or 70S ribosomes.

The protein resides in the cytoplasm. In terms of biological role, one of several proteins that assist in the late maturation steps of the functional core of the 30S ribosomal subunit. Associates with free 30S ribosomal subunits (but not with 30S subunits that are part of 70S ribosomes or polysomes). Required for efficient processing of 16S rRNA. May interact with the 5'-terminal helix region of 16S rRNA. The sequence is that of Ribosome-binding factor A from Natranaerobius thermophilus (strain ATCC BAA-1301 / DSM 18059 / JW/NM-WN-LF).